Reading from the N-terminus, the 135-residue chain is Large ribosomal subunit protein uL22 (135 aa).

Belongs to the universal ribosomal protein uL22 family. In terms of assembly, part of the 50S ribosomal subunit.

This protein binds specifically to 23S rRNA; its binding is stimulated by other ribosomal proteins, e.g. L4, L17, and L20. It is important during the early stages of 50S assembly. It makes multiple contacts with different domains of the 23S rRNA in the assembled 50S subunit and ribosome. Functionally, the globular domain of the protein is located near the polypeptide exit tunnel on the outside of the subunit, while an extended beta-hairpin is found that lines the wall of the exit tunnel in the center of the 70S ribosome. This chain is Large ribosomal subunit protein uL22, found in Malacoplasma penetrans (strain HF-2) (Mycoplasma penetrans).